A 364-amino-acid polypeptide reads, in one-letter code: Cobalt-precorrin-5B C(1)-methyltransferase (364 aa).

Belongs to the CbiD family.

It carries out the reaction Co-precorrin-5B + S-adenosyl-L-methionine = Co-precorrin-6A + S-adenosyl-L-homocysteine. Its pathway is cofactor biosynthesis; adenosylcobalamin biosynthesis; cob(II)yrinate a,c-diamide from sirohydrochlorin (anaerobic route): step 6/10. Functionally, catalyzes the methylation of C-1 in cobalt-precorrin-5B to form cobalt-precorrin-6A. The protein is Cobalt-precorrin-5B C(1)-methyltransferase of Pseudomonas putida (strain ATCC 700007 / DSM 6899 / JCM 31910 / BCRC 17059 / LMG 24140 / F1).